Here is a 490-residue protein sequence, read N- to C-terminus: Bifunctional protein HldE (490 aa).

The interval 1-330 (MLDFEAVLPA…RKVLPPASLA (330 aa)) is ribokinase. 205-208 (NRKE) contacts ATP. D275 is a catalytic residue. Residues 358–490 (FTNGCFDILH…LVARAQNGKA (133 aa)) are cytidylyltransferase.

In the N-terminal section; belongs to the carbohydrate kinase PfkB family. It in the C-terminal section; belongs to the cytidylyltransferase family. Homodimer.

It carries out the reaction D-glycero-beta-D-manno-heptose 7-phosphate + ATP = D-glycero-beta-D-manno-heptose 1,7-bisphosphate + ADP + H(+). The catalysed reaction is D-glycero-beta-D-manno-heptose 1-phosphate + ATP + H(+) = ADP-D-glycero-beta-D-manno-heptose + diphosphate. It participates in nucleotide-sugar biosynthesis; ADP-L-glycero-beta-D-manno-heptose biosynthesis; ADP-L-glycero-beta-D-manno-heptose from D-glycero-beta-D-manno-heptose 7-phosphate: step 1/4. Its pathway is nucleotide-sugar biosynthesis; ADP-L-glycero-beta-D-manno-heptose biosynthesis; ADP-L-glycero-beta-D-manno-heptose from D-glycero-beta-D-manno-heptose 7-phosphate: step 3/4. Functionally, catalyzes the phosphorylation of D-glycero-D-manno-heptose 7-phosphate at the C-1 position to selectively form D-glycero-beta-D-manno-heptose-1,7-bisphosphate. Catalyzes the ADP transfer from ATP to D-glycero-beta-D-manno-heptose 1-phosphate, yielding ADP-D-glycero-beta-D-manno-heptose. The polypeptide is Bifunctional protein HldE (Rhodopseudomonas palustris (strain BisB18)).